A 734-amino-acid polypeptide reads, in one-letter code: Photosystem I P700 chlorophyll a apoprotein A2 (734 aa).

8 helical membrane passes run 46 to 69, 135 to 158, 175 to 199, 273 to 291, 330 to 353, 369 to 395, 417 to 439, and 517 to 535; these read IFAS…FHVA, LYAG…LHLQ, LNHH…HVAI, IAHH…GHMY, LHFQ…QHLY, AALY…IFFV, AIIS…LYVH, and FLVH…LILV. C559 and C568 together coordinate [4Fe-4S] cluster. 2 consecutive transmembrane segments (helical) span residues 575-596 and 643-665; these read AFYL…YWHW and LSVW…MFLI. 3 residues coordinate chlorophyll a: H654, M662, and Y670. W671 provides a ligand contact to phylloquinone. A helical membrane pass occupies residues 707 to 727; sequence LVGLVHFSVGYVLTYAAFVIA.

The protein belongs to the PsaA/PsaB family. The PsaA/B heterodimer binds the P700 chlorophyll special pair and subsequent electron acceptors. PSI consists of a core antenna complex that captures photons, and an electron transfer chain that converts photonic excitation into a charge separation. The eukaryotic PSI reaction center is composed of at least 11 subunits. Requires P700 is a chlorophyll a/chlorophyll a' dimer, A0 is one or more chlorophyll a, A1 is one or both phylloquinones and FX is a shared 4Fe-4S iron-sulfur center. as cofactor.

Its subcellular location is the plastid. The protein resides in the chloroplast thylakoid membrane. It catalyses the reaction reduced [plastocyanin] + hnu + oxidized [2Fe-2S]-[ferredoxin] = oxidized [plastocyanin] + reduced [2Fe-2S]-[ferredoxin]. Its function is as follows. PsaA and PsaB bind P700, the primary electron donor of photosystem I (PSI), as well as the electron acceptors A0, A1 and FX. PSI is a plastocyanin/cytochrome c6-ferredoxin oxidoreductase, converting photonic excitation into a charge separation, which transfers an electron from the donor P700 chlorophyll pair to the spectroscopically characterized acceptors A0, A1, FX, FA and FB in turn. Oxidized P700 is reduced on the lumenal side of the thylakoid membrane by plastocyanin or cytochrome c6. The chain is Photosystem I P700 chlorophyll a apoprotein A2 from Cyanidium caldarium (Red alga).